The chain runs to 323 residues: MPGDEQEAKKAAQRTEEGVHITEALITKRNLTFPGDEDLSEKMFHTLGELETVRLDGEGITCIGNLEKLRNIHSLYLQSNKIQRIENLACITSLRFLSLARNQIRHVENLLDLQYLQFLDLSENLIETLKLDELPESLLILNLCGNPCTNQEGYRKMVIGALPLLLDLDKQPILERWTSDEEDKSSDDDDEFPELNGPFCAERGFFKDLEQELHQHQERRQQAALTEHLSRMETQPVLTDLPLLPAVPMAGDCSSTATDQPGKESAPKATSSTQTASTTKKQVSKNQKSSVQARKGALAATTSKTSQAATPSMTKMTNKKSTK.

LRR repeat units lie at residues 49–70 (ELET…EKLR), 71–92 (NIHS…ACIT), 93–114 (SLRF…LDLQ), and 115–135 (YLQF…DELP). The LRRCT domain occupies 146–188 (NPCTNQEGYRKMVIGALPLLLDLDKQPILERWTSDEEDKSSDD). Thr178 carries the phosphothreonine modification. 3 positions are modified to phosphoserine: Ser179, Ser185, and Ser186. The stretch at 203-228 (RGFFKDLEQELHQHQERRQQAALTEH) forms a coiled coil. The segment at 249 to 323 (MAGDCSSTAT…TKMTNKKSTK (75 aa)) is disordered. Positions 267 to 316 (PKATSSTQTASTTKKQVSKNQKSSVQARKGALAATTSKTSQAATPSMTKM) are enriched in low complexity. Position 303 is a phosphoserine (Ser303).

As to expression, testis-specific (at protein level).

The protein resides in the cell projection. The protein localises to the cilium. It localises to the flagellum. Functionally, required for normal spermatogenesis and male fertility. Plays an important role in sperm flagellum biogenesis. The polypeptide is Leucine-rich repeat-containing protein 46 (Lrrc46) (Mus musculus (Mouse)).